Consider the following 339-residue polypeptide: Undecaprenyl-phosphate 4-deoxy-4-formamido-L-arabinose transferase (339 aa).

A run of 2 helical transmembrane segments spans residues 235–255 (LSII…MLIV) and 270–290 (FVLF…MGLL).

It belongs to the glycosyltransferase 2 family.

Its subcellular location is the cell inner membrane. It catalyses the reaction UDP-4-deoxy-4-formamido-beta-L-arabinose + di-trans,octa-cis-undecaprenyl phosphate = 4-deoxy-4-formamido-alpha-L-arabinopyranosyl di-trans,octa-cis-undecaprenyl phosphate + UDP. The protein operates within glycolipid biosynthesis; 4-amino-4-deoxy-alpha-L-arabinose undecaprenyl phosphate biosynthesis; 4-amino-4-deoxy-alpha-L-arabinose undecaprenyl phosphate from UDP-4-deoxy-4-formamido-beta-L-arabinose and undecaprenyl phosphate: step 1/2. It participates in bacterial outer membrane biogenesis; lipopolysaccharide biosynthesis. Its function is as follows. Catalyzes the transfer of 4-deoxy-4-formamido-L-arabinose from UDP to undecaprenyl phosphate. The modified arabinose is attached to lipid A and is required for resistance to polymyxin and cationic antimicrobial peptides. In Pseudomonas fluorescens (strain ATCC BAA-477 / NRRL B-23932 / Pf-5), this protein is Undecaprenyl-phosphate 4-deoxy-4-formamido-L-arabinose transferase.